An 83-amino-acid chain; its full sequence is Mu-theraphotoxin-Hhn2e (83 aa).

Positions 1-21 (MKASMFLALAGLVLLFVVGYA) are cleaved as a signal peptide. Positions 22-48 (SESEEKEFPRELLSKIFAVDDFKGEER) are excised as a propeptide. Cystine bridges form between C50-C65, C57-C70, and C64-C77. Leucine amide is present on L81.

Belongs to the neurotoxin 10 (Hwtx-1) family. 15 (Hntx-3) subfamily. In terms of assembly, monomer. As to expression, expressed by the venom gland.

Its subcellular location is the secreted. Its function is as follows. Lethal neurotoxin. Selectively blocks tetrodotoxin-sensitive voltage-gated sodium channels (Nav). Does not affect tetrodotoxin-resistant voltage-gated sodium channels or calcium channels. The protein is Mu-theraphotoxin-Hhn2e of Cyriopagopus hainanus (Chinese bird spider).